The primary structure comprises 68 residues: U-poneritoxin(01)-Om4a (68 aa).

A signal peptide spans 1–25 (MKPSSLTLAFLVVFMMAIMYNSVQA). A propeptide spanning residues 26 to 39 (EALADADAEAFAEA) is cleaved from the precursor.

It belongs to the formicidae venom precursor-01 superfamily. As to quaternary structure, homo- or heterodimer with PLP7 (AC A0A348G6I9); disulfide-linked. In terms of processing, truncated sequences of this peptide have also been found in the venom. It is possible they have been cleaved in the venom. As to expression, expressed by the venom gland.

It is found in the secreted. This homodimer composed of two cationic amphipathic alpha-helical peptides has antimicrobial activities against E.coli (MIC=3.1 uM), S.aureus (MIC=3.1 uM), and S.cerevisiae (MIC=3.1 uM). It also shows histamine-releasing activity (66.4% at 10 uM) and a weak hemolytic activity (10.5% at 50 uM). The sequence is that of U-poneritoxin(01)-Om4a from Odontomachus monticola (Trap-jaw ant).